Here is a 265-residue protein sequence, read N- to C-terminus: Ubiquinone biosynthesis protein COQ4 homolog, mitochondrial (265 aa).

A mitochondrion-targeting transit peptide spans Met-1–Arg-30. Position 108 is a phosphoserine (Ser-108). Residues His-163, Asp-164, His-167, and Glu-179 each coordinate Zn(2+).

The protein belongs to the COQ4 family. As to quaternary structure, component of a multi-subunit COQ enzyme complex, composed of at least COQ3, COQ4, COQ5, COQ6, COQ7 and COQ9. Zn(2+) is required as a cofactor. Expressed ubiquitously, but at high levels in liver, lung and pancreas.

The protein resides in the mitochondrion inner membrane. The catalysed reaction is 4-hydroxy-3-methoxy-5-(all-trans-decaprenyl)benzoate + H(+) = 2-methoxy-6-(all-trans-decaprenyl)phenol + CO2. It functions in the pathway cofactor biosynthesis; ubiquinone biosynthesis. Its function is as follows. Lyase that catalyzes the C1-decarboxylation of 4-hydroxy-3-methoxy-5-(all-trans-decaprenyl)benzoic acid into 2-methoxy-6-(all-trans-decaprenyl)phenol during ubiquinone biosynthesis. This Homo sapiens (Human) protein is Ubiquinone biosynthesis protein COQ4 homolog, mitochondrial.